The primary structure comprises 199 residues: GTP cyclohydrolase-2 (199 aa).

52–56 lines the GTP pocket; that stretch reads RMHSE. The Zn(2+) site is built by C57, C68, and C70. GTP is bound by residues Q73, 94–96, and T116; that span reads EGR. D128 acts as the Proton acceptor in catalysis. R130 serves as the catalytic Nucleophile. GTP contacts are provided by T151 and K156.

The protein belongs to the GTP cyclohydrolase II family. It depends on Zn(2+) as a cofactor.

It carries out the reaction GTP + 4 H2O = 2,5-diamino-6-hydroxy-4-(5-phosphoribosylamino)-pyrimidine + formate + 2 phosphate + 3 H(+). It functions in the pathway cofactor biosynthesis; riboflavin biosynthesis; 5-amino-6-(D-ribitylamino)uracil from GTP: step 1/4. Functionally, catalyzes the conversion of GTP to 2,5-diamino-6-ribosylamino-4(3H)-pyrimidinone 5'-phosphate (DARP), formate and pyrophosphate. In Aliivibrio fischeri (strain ATCC 700601 / ES114) (Vibrio fischeri), this protein is GTP cyclohydrolase-2.